A 294-amino-acid chain; its full sequence is Glyceraldehyde-3-phosphate dehydrogenase (294 aa).

Positions 19, 63, and 105 each coordinate NAD(+). Residues 134–136 (SCT) and Thr165 each bind D-glyceraldehyde 3-phosphate. Cys135 functions as the Nucleophile in the catalytic mechanism. Lys177 bears the N6-acetyllysine mark. D-glyceraldehyde 3-phosphate-binding positions include 194-195 (TG) and Arg217. Lys234 bears the N6-acetyllysine mark.

This sequence belongs to the glyceraldehyde-3-phosphate dehydrogenase family. As to quaternary structure, homotetramer.

Its subcellular location is the cytoplasm. The enzyme catalyses D-glyceraldehyde 3-phosphate + phosphate + NAD(+) = (2R)-3-phospho-glyceroyl phosphate + NADH + H(+). The protein operates within carbohydrate degradation; glycolysis; pyruvate from D-glyceraldehyde 3-phosphate: step 1/5. Catalyzes the oxidative phosphorylation of glyceraldehyde 3-phosphate (G3P) to 1,3-bisphosphoglycerate (BPG) using the cofactor NAD. The first reaction step involves the formation of a hemiacetal intermediate between G3P and a cysteine residue, and this hemiacetal intermediate is then oxidized to a thioester, with concomitant reduction of NAD to NADH. The reduced NADH is then exchanged with the second NAD, and the thioester is attacked by a nucleophilic inorganic phosphate to produce BPG. In Pseudescherichia vulneris (Escherichia vulneris), this protein is Glyceraldehyde-3-phosphate dehydrogenase (gap).